The following is a 183-amino-acid chain: Adenine phosphoribosyltransferase (183 aa).

It belongs to the purine/pyrimidine phosphoribosyltransferase family. Homodimer.

It localises to the cytoplasm. The catalysed reaction is AMP + diphosphate = 5-phospho-alpha-D-ribose 1-diphosphate + adenine. Its pathway is purine metabolism; AMP biosynthesis via salvage pathway; AMP from adenine: step 1/1. Functionally, catalyzes a salvage reaction resulting in the formation of AMP, that is energically less costly than de novo synthesis. This chain is Adenine phosphoribosyltransferase, found in Sodalis glossinidius (strain morsitans).